We begin with the raw amino-acid sequence, 681 residues long: Peroxisomal acyl-coenzyme A oxidase 2 (681 aa).

A phosphoserine mark is found at Ser-3 and Ser-9. Thr-13 carries the phosphothreonine modification. An N6-succinyllysine mark is found at Lys-66, Lys-137, Lys-453, and Lys-561. The short motif at 679–681 (SKL) is the Microbody targeting signal element.

The protein belongs to the acyl-CoA oxidase family. As to quaternary structure, homodimer. FAD serves as cofactor. In terms of tissue distribution, present in all tissues tested: heart, brain, placenta, lung, liver, skeletal muscle, kidney and pancreas. Most abundant in heart, liver and kidney.

Its subcellular location is the peroxisome. It catalyses the reaction (25R)-3alpha,7alpha,12alpha-trihydroxy-5beta-cholestan-26-oyl-CoA + A + H2O = (24R,25R)-3alpha,7alpha,12alpha,24-tetrahydroxy-5beta-cholestan-26-oyl-CoA + AH2. It carries out the reaction (25S)-3alpha,7alpha,12alpha-trihydroxy-5beta-cholestan-26-oyl-CoA + O2 = (24E)-3alpha,7alpha,12alpha-trihydroxy-5beta-cholest-24-en-26-oyl-CoA + H2O2. In terms of biological role, oxidizes the CoA esters of the bile acid intermediates di- and tri-hydroxycholestanoic acids. Capable of oxidizing short as well as long chain 2-methyl branched fatty acids. The chain is Peroxisomal acyl-coenzyme A oxidase 2 from Homo sapiens (Human).